The primary structure comprises 62 residues: Agnoprotein (62 aa).

At 1 to 23 the chain is on the cytoplasmic side; the sequence is MVLRRLSRQASVKVRRSWTESKK. The chain crosses the membrane as a helical; Signal-anchor for type II membrane protein span at residues 24–40; sequence TAQRLFVFVLELLLQFC. Over 41 to 62 the chain is Extracellular; it reads EGEDTVDGKRKKPERLTEKPES.

This sequence belongs to the polyomaviruses agnoprotein family. Homooligomer. Interacts with VP1. Interacts with large T antigen; this interaction may impact upon the activity of T-antigen on the control of viral gene transcription and replication. Interacts with small t antigen. Interacts with host CBX5; this interaction induces the dissociation of CBX5 from LBR, resulting in destabilization of the nuclear envelope. Post-translationally, phosphorylated by host kinase. Phosphorylation segregates agnoprotein in cytoplasm, whereas unphosphorylated agnoprotein migrate to the nucleus.

The protein localises to the host cytoplasm. Its subcellular location is the host nucleus membrane. It is found in the host rough endoplasmic reticulum membrane. It localises to the host cell membrane. Alters the structure of the nuclear envelope by interacting with host CBX5 and disrupting CBX5 association with LBR. Involved in the perinuclear-nuclear localization of the capsid protein VP1 during virion assembly and maturation. Plays an important role in the release of progeny virions from infected cells and in viral propagation, probably by acting as a viral ionic channel in the host plasma membrane. Allows influx of extracellular calcium ions in the host cell. May contribute to viral genome transcription and translation of viral late proteins. The chain is Agnoprotein from Simian virus 40 (SV40).